We begin with the raw amino-acid sequence, 103 residues long: Small ribosomal subunit protein uS10 (103 aa).

This sequence belongs to the universal ribosomal protein uS10 family. Part of the 30S ribosomal subunit.

In terms of biological role, involved in the binding of tRNA to the ribosomes. In Bordetella petrii (strain ATCC BAA-461 / DSM 12804 / CCUG 43448), this protein is Small ribosomal subunit protein uS10.